Consider the following 526-residue polypeptide: Ferrochelatase-2, chloroplastic (526 aa).

This sequence belongs to the ferrochelatase family.

It is found in the plastid. Its subcellular location is the chloroplast. The catalysed reaction is heme b + 2 H(+) = protoporphyrin IX + Fe(2+). It participates in porphyrin-containing compound metabolism; protoheme biosynthesis; protoheme from protoporphyrin-IX: step 1/1. In terms of biological role, catalyzes the ferrous insertion into protoporphyrin IX. This chain is Ferrochelatase-2, chloroplastic, found in Oryza sativa subsp. japonica (Rice).